We begin with the raw amino-acid sequence, 275 residues long: Protein FAM210A (275 aa).

The interval 51 to 100 is disordered; it reads KWLHSQPKQQDTATKTPVHDLPSGIQHQSEETSPSARSSISTDPSSIAEE. Polar residues-rich tracts occupy residues 56 to 65 and 75 to 95; these read QPKQQDTATK and IQHQSEETSPSARSSISTDPS. The DUF1279 domain occupies 105-217; it reads DQSIGLLKRF…GYLSTPPLVK (113 aa). The chain crosses the membrane as a helical span at residues 124–144; it reads VLIPVHLVTSSIWFGSFYYAA. Residues 221-275 are a coiled coil; the sequence is QDRMEETKELFTEKMEETRDIISGKMEETKDRISEKLQETKDRVAFRKKKNEDME.

This sequence belongs to the FAM210 family.

Its subcellular location is the membrane. It is found in the mitochondrion. The protein localises to the cytoplasm. In terms of biological role, may play a role in the structure and strength of both muscle and bone. The polypeptide is Protein FAM210A (fam210a) (Xenopus laevis (African clawed frog)).